Reading from the N-terminus, the 264-residue chain is Neuferricin (264 aa).

A signal peptide spans 1 to 22 (MLRCGGRGLLLGLAVAAAAVMA). The Cytochrome b5 heme-binding domain maps to 35–134 (FRLFIPEELS…KNYVCVGRVT (100 aa)).

This sequence belongs to the cytochrome b5 family. MAPR subfamily.

The protein localises to the secreted. Functionally, heme-binding protein which promotes neuronal but not astrocyte differentiation. This is Neuferricin from Homo sapiens (Human).